Here is a 377-residue protein sequence, read N- to C-terminus: MPSAVQLAEKNHEKDSKFAKALHGESYKQTGLKALMSKARDASEVANDGYFKHWDGGVTKEDEDKRLSDYSNLTAHYYNLVTDFYEYGWGSSFHFSRYYTGEAFRQATARHEHFLAHKMQINENMKVLDVGCGVGGPAREICRFTDCSIVGLNNNDYQIERANHYARKYKLDDKLSFVKGDFMQMDFEAESFDAVYAIEATVHAPVLEGVYSEIYKVLKPGGVFGVYEWVMTDKYDDENEEHRKIAYGIEVGDGIPKMYKREVAEKALKSVGFEIEYEADLADKEDDIPWYYPLSGEWKYVQTLSDYFTIFRTSKVGRTITTEAVGLMEKLGLAPKGSKQVTNALEDAAVNLVEGGRQKLFTPMMLYVCRKPANEDI.

It belongs to the class I-like SAM-binding methyltransferase superfamily. Erg6/SMT family.

It carries out the reaction zymosterol + S-adenosyl-L-methionine = fecosterol + S-adenosyl-L-homocysteine + H(+). The protein operates within steroid metabolism; ergosterol biosynthesis; ergosterol from zymosterol: step 1/5. Its function is as follows. Catalyzes the methyl transfer from S-adenosyl-methionine to the C-24 of zymosterol to form fecosterol. The chain is Sterol 24-C-methyltransferase (ERG6) from Debaryomyces hansenii (strain ATCC 36239 / CBS 767 / BCRC 21394 / JCM 1990 / NBRC 0083 / IGC 2968) (Yeast).